The chain runs to 116 residues: Large ribosomal subunit protein bL20 (116 aa).

It belongs to the bacterial ribosomal protein bL20 family.

Binds directly to 23S ribosomal RNA and is necessary for the in vitro assembly process of the 50S ribosomal subunit. It is not involved in the protein synthesizing functions of that subunit. The polypeptide is Large ribosomal subunit protein bL20 (Helicobacter pylori (strain G27)).